A 445-amino-acid polypeptide reads, in one-letter code: UDP-glucuronic acid decarboxylase 2 (445 aa).

An N-acetylalanine modification is found at alanine 2. The Cytoplasmic segment spans residues 2–43 (ASELINRRHETDQPTADAYYPKPIKPWFTVTRPMRYMLREQR). The chain crosses the membrane as a helical; Signal-anchor for type II membrane protein span at residues 44–64 (LIFVLVGIAIATLVFTIFPRS). At 65–445 (TQSTPYSDPF…AATTTKTTSA (381 aa)) the chain is on the lumenal side. 149-174 (DNFFTGRKENVMHHFSNPNFEMIRHD) serves as a coordination point for NAD(+). Arginine 258 contacts substrate. The active-site Proton acceptor is the tyrosine 261. 261–265 (YDEGK) lines the NAD(+) pocket. Residue asparagine 290 coordinates substrate. Arginine 302 is an NAD(+) binding site. Substrate is bound by residues 303–307 (VVSNF), 320–327 (YGDGKQTR), and 387–391 (DPHKR).

This sequence belongs to the NAD(P)-dependent epimerase/dehydratase family. UDP-glucuronic acid decarboxylase subfamily. As to quaternary structure, homodimer. Requires NAD(+) as cofactor. Ubiquitous.

It localises to the golgi apparatus. Its subcellular location is the golgi stack membrane. The catalysed reaction is UDP-alpha-D-glucuronate + H(+) = UDP-alpha-D-xylose + CO2. It participates in nucleotide-sugar biosynthesis; UDP-alpha-D-xylose biosynthesis; UDP-alpha-D-xylose from UDP-alpha-D-glucuronate: step 1/1. Catalyzes the NAD-dependent decarboxylation of UDP-glucuronic acid to UDP-xylose. Necessary for the biosynthesis of the core tetrasaccharide in glycosaminoglycan biosynthesis. The chain is UDP-glucuronic acid decarboxylase 2 (UXS2) from Arabidopsis thaliana (Mouse-ear cress).